Here is a 282-residue protein sequence, read N- to C-terminus: ESX-1 secretion-associated protein EspG1 (282 aa).

This sequence belongs to the EspG family. In terms of assembly, interacts specifically with ESX-1-dependent PE/PPE proteins.

It localises to the cytoplasm. Part of the ESX-1 / type VII specialized secretion system (T7SS), which exports several proteins including EsxA and EsxB. Specific chaperone for cognate PE/PPE proteins, plays an important role in preventing aggregation of PE/PPE dimers. Also plays a role in DNA conjugation, in at least recipient strain. This is ESX-1 secretion-associated protein EspG1 from Mycolicibacterium smegmatis (strain ATCC 700084 / mc(2)155) (Mycobacterium smegmatis).